A 94-amino-acid chain; its full sequence is Phosphoribosyl-ATP pyrophosphatase (94 aa).

Belongs to the PRA-PH family.

Its subcellular location is the cytoplasm. The enzyme catalyses 1-(5-phospho-beta-D-ribosyl)-ATP + H2O = 1-(5-phospho-beta-D-ribosyl)-5'-AMP + diphosphate + H(+). It participates in amino-acid biosynthesis; L-histidine biosynthesis; L-histidine from 5-phospho-alpha-D-ribose 1-diphosphate: step 2/9. The sequence is that of Phosphoribosyl-ATP pyrophosphatase from Pyrobaculum islandicum (strain DSM 4184 / JCM 9189 / GEO3).